Consider the following 380-residue polypeptide: Alcohol dehydrogenase 3 (380 aa).

The Zn(2+) site is built by cysteine 48, threonine 50, histidine 70, cysteine 100, cysteine 103, cysteine 106, cysteine 114, and cysteine 178. The an alcohol site is built by threonine 50 and histidine 70. Threonine 50 provides a ligand contact to NAD(+). NAD(+) contacts are provided by residues 203–208 (GLGAVG), aspartate 227, arginine 232, threonine 273, valine 296, 296–298 (VGV), phenylalanine 323, and arginine 373.

Belongs to the zinc-containing alcohol dehydrogenase family. As to quaternary structure, homodimer. Homotetramer. Zn(2+) serves as cofactor.

It is found in the cytoplasm. It catalyses the reaction a primary alcohol + NAD(+) = an aldehyde + NADH + H(+). It carries out the reaction a secondary alcohol + NAD(+) = a ketone + NADH + H(+). The chain is Alcohol dehydrogenase 3 (ADH3) from Solanum tuberosum (Potato).